A 55-amino-acid chain; its full sequence is Sporulation killing factor (55 aa).

Residues 1–29 (MKRNQKEWESVSKKGLMKPGGTSIVKAAG) constitute a propeptide that is removed on maturation. Cysteines 30 and 45 form a disulfide. The cyclopeptide (Cys-Ile) cross-link spans 30 to 55 (CMGCWASKSIAMTRVCALPHPAMRAI). Residues 33 to 41 (CWASKSIAM) constitute a cross-link (2-(S-cysteinyl)-methionine (Cys-Met)).

This is a cyclic peptide. The first step in SKF maturation is probably thioether bond formation.

The protein resides in the secreted. Functionally, produces a 26-residue extracellular sporulation killing factor (SKF) that induces the lysis of other B.subtilis cells that have not entered the sporulation pathway, providing a source of nutrients to support sporulation, and at the same time delaying commitment to the energetically expensive and irreversible onset of sporulation. Can also inhibit growth of other bacteria at high concentrations. Addition of SKF to solid cultures induces killing, but it is much less effective than SDP (AC O34344). Has a role in protecting the secreted lipase LipA against proteolysis, either by modulating its folding or by acting as a protease inhibitor. The polypeptide is Sporulation killing factor (Bacillus subtilis (strain 168)).